Consider the following 155-residue polypeptide: UPF0260 protein Smed_0627 (155 aa).

This sequence belongs to the UPF0260 family.

The chain is UPF0260 protein Smed_0627 from Sinorhizobium medicae (strain WSM419) (Ensifer medicae).